A 277-amino-acid polypeptide reads, in one-letter code: Probable endonuclease 4 (277 aa).

Positions 70, 108, 143, 176, 179, 210, 223, 225, and 255 each coordinate Zn(2+).

The protein belongs to the AP endonuclease 2 family. Requires Zn(2+) as cofactor.

It catalyses the reaction Endonucleolytic cleavage to 5'-phosphooligonucleotide end-products.. Functionally, endonuclease IV plays a role in DNA repair. It cleaves phosphodiester bonds at apurinic or apyrimidinic (AP) sites, generating a 3'-hydroxyl group and a 5'-terminal sugar phosphate. This Mycoplasmopsis synoviae (strain 53) (Mycoplasma synoviae) protein is Probable endonuclease 4.